Consider the following 2253-residue polypeptide: Polycystin family receptor for egg jelly (2253 aa).

A signal peptide spans 1–19 (MRPGPALLLLGVGLSLSVG). Residues 20-1184 (RLPLPPVPRG…NIIKSLHQNP (1165 aa)) lie on the Extracellular side of the membrane. The segment covering 154–169 (RPASPAARVSPRSAAP) has biased composition (low complexity). Residues 154 to 177 (RPASPAARVSPRSAAPGPRPQQGF) form a disordered region. 14 N-linked (GlcNAc...) asparagine glycosylation sites follow: Asn197, Asn242, Asn295, Asn306, Asn345, Asn349, Asn481, Asn674, Asn849, Asn890, Asn923, Asn939, Asn958, and Asn965. The 699-residue stretch at 215-913 (CVIQRVRINT…STMFCDFTND (699 aa)) folds into the REJ domain. The chain crosses the membrane as a helical span at residues 1185–1205 (VTLFTVLFIILLYVGLAFWAL). The Cytoplasmic segment spans residues 1206-1389 (YRDEMDQHLR…VAKTFNRLQR (184 aa)). The PLAT domain maps to 1230-1347 (LCYLVTIFTG…TLDRTFHVTH (118 aa)). A helical transmembrane segment spans residues 1390–1410 (LSCCLAMLLSSLLCNIMFFNL). Over 1411 to 1427 (NRQEQTESRERKYMRSM) the chain is Extracellular. The helical transmembrane segment at 1428–1448 (MIGIESVLITIPVQLLITFLF) threads the bilayer. Residues 1449 to 1576 (TCSQRKPQAD…KPRIVLPWWC (128 aa)) are Cytoplasmic-facing. Positions 1494–1562 (PREVAKPASK…EQHPSQKDLQ (69 aa)) are disordered. The span at 1517 to 1527 (SKPKHRHRKAQ) shows a compositional bias: basic residues. Residues 1549–1558 (DVHSEQHPSQ) show a composition bias toward basic and acidic residues. The chain crosses the membrane as a helical span at residues 1577–1597 (VYVAWFLVFATSSISSFFIVF). The Extracellular segment spans residues 1598 to 1607 (YGLTYGYDKS). Residues 1608-1628 (IEWLFASFCSFCQSVLLVQPS) traverse the membrane as a helical segment. Over 1629–1708 (KIILLSGFRT…RKKRIKRRAL (80 aa)) the chain is Cytoplasmic. A helical transmembrane segment spans residues 1709–1729 (LFLSYILTHFIFLALLLILIV). At 1730–1966 (LLRHTDCFYY…FDRKASAEIY (237 aa)) the chain is on the extracellular side. N-linked (GlcNAc...) asparagine glycosylation is found at Asn1836, Asn1893, and Asn1944. Residues 1967–1987 (LYVAILIFFLAYVVDEGCIIM) form a helical membrane-spanning segment. Over 1988–1996 (QERASYVRS) the chain is Cytoplasmic. The helical transmembrane segment at 1997-2017 (VYNLLNFALKCIFTVLIVLFL) threads the bilayer. Over 2018–2042 (RKHFLATGIIRFYLSNPEDFIPFHA) the chain is Extracellular. A helical transmembrane segment spans residues 2043 to 2063 (VSQVDHIMRIILGFLLFLTIL). The Cytoplasmic segment spans residues 2064-2091 (KTLRYSRFFYDVRLAQRAIQAALPGICH). The helical transmembrane segment at 2092-2112 (MAFVVSVYFFVYMAFGYLVFG) threads the bilayer. The Extracellular portion of the chain corresponds to 2113–2145 (QHEWNYSNLIHSTQTVFSYCVSAFQNTEFSNNR). Residues 2146 to 2166 (ILGVLFLSSFMLVMICVLINL) traverse the membrane as a helical segment. Topologically, residues 2167–2253 (FQAVILSAYE…NGKKMVYLVV (87 aa)) are cytoplasmic.

This sequence belongs to the polycystin family. As to expression, exclusively expressed in testis.

The protein resides in the cell membrane. The protein localises to the cytoplasmic vesicle. It is found in the secretory vesicle. Its subcellular location is the acrosome membrane. It localises to the nucleus. In terms of biological role, testis-specific protein that controls sperm transport and the timing of zona pellucida-evoked exocytosis of the sperm acrosome. This chain is Polycystin family receptor for egg jelly, found in Homo sapiens (Human).